The primary structure comprises 266 residues: MGSSKLLSLALLLVLLTHANSASETSFNFTSFDTNKLILQGDASVSSKGQLLLTKVRGNGDPTVDSMGRAFYYAPIQIRDSTTGKLASFDTNFTFSIRPYSNNENSAFGLAFALVPVDSEPKRKDYFLGLFNKPDDPEAHIVAVVFDTSSNQIEIDMNSISPVARESCHFHKYNGEKVEVRITYDSSKKNLRASLVYLREQSATSSTSSVHMEKVLNDWVSVGFSATSGLYDPTSETHDVLSWSFSSKFSQHTTSERSNFLLNMFL.

Residues 1–21 (MGSSKLLSLALLLVLLTHANS) form the signal peptide. N-linked (GlcNAc...) asparagine glycans are attached at residues N28 and N92.

This sequence belongs to the leguminous lectin family.

Its function is as follows. Seed storage. This carbohydrate-binding lectin has toxic effects on the important bean bruchid pests, Z.subfasciatus and A.obtectus. The chain is Arcelin-4 (ARC4) from Phaseolus vulgaris (Kidney bean).